Here is a 51-residue protein sequence, read N- to C-terminus: MLSAKGVSLGLGLGLGAWGPVLLGVVGVAGAIALYGYYKNRNAEPAAAEAV.

The Lumenal portion of the chain corresponds to 1–12 (MLSAKGVSLGLG). The tract at residues 9–16 (LGLGLGLG) is LG region. Residues 13-33 (LGLGAWGPVLLGVVGVAGAIA) form a helical membrane-spanning segment. At 34-51 (LYGYYKNRNAEPAAAEAV) the chain is on the cytoplasmic side.

Belongs to the magnetosome MamD/Mms5 family. In terms of processing, seen in gels as a band of about 5 kDa, with an N-terminus that corresponds to residue 8, suggesting it may undergo N-terminal cleavage.

It is found in the magnetosome membrane. Functionally, might be involved in magnetite crystal growth. This Paramagnetospirillum magneticum (strain ATCC 700264 / AMB-1) (Magnetospirillum magneticum) protein is Magnetosome protein Mms5.